The chain runs to 890 residues: Wolframin (890 aa).

Met1 bears the N-acetylmethionine mark. The disordered stretch occupies residues 1 to 86; the sequence is MDSNTAPLGP…TGPTKGDMEI (86 aa). Residues 1-321 are interaction with ATP6V1A; that stretch reads MDSNTAPLGP…MHWLSTIIPT (321 aa). The span at 10 to 20 shows a compositional bias: pro residues; that stretch reads PSCPQPPPAPQ. Residue Thr30 is modified to Phosphothreonine; by FAM20C. The residue at position 32 (Ser32) is a Phosphoserine; by FAM20C. Ser157 is subject to Phosphoserine. The next 10 membrane-spanning stretches (helical) occupy residues 314-334, 340-360, 402-422, 427-447, 465-485, 496-516, 529-549, 563-583, 589-609, and 632-652; these read WLST…FIVS, FFAF…MVIC, LEPY…FPIA, IPCS…YLSL, AGLL…KVLG, LVVL…YLFF, CYLV…VILL, YFLF…VGVL, FTSL…VPLL, and MVKL…FYVY. Residues 653 to 869 lie on the Lumenal side of the membrane; that stretch reads RSEGMKVYNS…HVKIEHDWRS (217 aa). N-linked (GlcNAc...) asparagine glycans are attached at residues Asn661 and Asn746. Residues 870–890 traverse the membrane as a helical segment; that stretch reads TVHGAVKFAFDFFFFPFLSAA.

In terms of assembly, interacts with ATP6V1A. In terms of tissue distribution, highly expressed in heart followed by brain, placenta, lung and pancreas. Weakly expressed in liver, kidney and skeletal muscle. Also expressed in islet and beta-cell insulinoma cell line.

The protein localises to the endoplasmic reticulum membrane. It localises to the cytoplasmic vesicle. Its subcellular location is the secretory vesicle. In terms of biological role, participates in the regulation of cellular Ca(2+) homeostasis, at least partly, by modulating the filling state of the endoplasmic reticulum Ca(2+) store. Negatively regulates the ER stress response and positively regulates the stability of V-ATPase subunits ATP6V1A and ATP1B1 by preventing their degradation through an unknown proteasome-independent mechanism. The sequence is that of Wolframin (WFS1) from Homo sapiens (Human).